We begin with the raw amino-acid sequence, 544 residues long: Histone-arginine methyltransferase CARMER (544 aa).

The SAM-dependent MTase PRMT-type domain occupies 150 to 459 (ASQYFQFYGY…QSYDVTIDLH (310 aa)). Positions 163, 172, 196, 218, 247, and 275 each coordinate S-adenosyl-L-methionine. The segment covering 505 to 520 (DTQQQQQGSRNSNSML) has biased composition (polar residues). The disordered stretch occupies residues 505–527 (DTQQQQQGSRNSNSMLNGGLSVN). The residue at position 514 (R514) is an Asymmetric dimethylarginine; by autocatalysis.

This sequence belongs to the class I-like SAM-binding methyltransferase superfamily. Protein arginine N-methyltransferase family. In terms of assembly, homodimer. Post-translationally, the dimethylated protein is the major form.

Its subcellular location is the cytoplasm. The protein localises to the nucleus. It carries out the reaction L-arginyl-[protein] + 2 S-adenosyl-L-methionine = N(omega),N(omega)-dimethyl-L-arginyl-[protein] + 2 S-adenosyl-L-homocysteine + 2 H(+). Methylates (mono- and asymmetric dimethylation) the guanidino nitrogens of arginyl residues in proteins. May methylate histone H3 at 'Arg-17' and activate transcription via chromatin remodeling. In Drosophila grimshawi (Hawaiian fruit fly), this protein is Histone-arginine methyltransferase CARMER (Art4).